Reading from the N-terminus, the 327-residue chain is Small ribosomal subunit protein uS2 (327 aa).

The tract at residues 258 to 327 is disordered; the sequence is AGHTPVSETL…PGVADGAALE (70 aa).

This sequence belongs to the universal ribosomal protein uS2 family.

The chain is Small ribosomal subunit protein uS2 from Anaplasma marginale (strain St. Maries).